The chain runs to 234 residues: Carboxy-S-adenosyl-L-methionine synthase (234 aa).

S-adenosyl-L-methionine is bound by residues Tyr35, 60-62, 83-84, 109-110, Asn124, and Arg191; these read GCS, DN, and DI.

The protein belongs to the class I-like SAM-binding methyltransferase superfamily. Cx-SAM synthase family. Homodimer.

It carries out the reaction prephenate + S-adenosyl-L-methionine = carboxy-S-adenosyl-L-methionine + 3-phenylpyruvate + H2O. Its function is as follows. Catalyzes the conversion of S-adenosyl-L-methionine (SAM) to carboxy-S-adenosyl-L-methionine (Cx-SAM). The polypeptide is Carboxy-S-adenosyl-L-methionine synthase (Campylobacter hominis (strain ATCC BAA-381 / DSM 21671 / CCUG 45161 / LMG 19568 / NCTC 13146 / CH001A)).